A 389-amino-acid polypeptide reads, in one-letter code: tRNA pseudouridine synthase Pus10 (389 aa).

The Nucleophile role is filled by Asp213. Residues Tyr278 and Tyr350 each contribute to the substrate site.

This sequence belongs to the pseudouridine synthase Pus10 family.

The catalysed reaction is uridine(54) in tRNA = pseudouridine(54) in tRNA. It carries out the reaction uridine(55) in tRNA = pseudouridine(55) in tRNA. Functionally, responsible for synthesis of pseudouridine from uracil-54 and uracil-55 in the psi GC loop of transfer RNAs. This is tRNA pseudouridine synthase Pus10 from Thermoplasma acidophilum (strain ATCC 25905 / DSM 1728 / JCM 9062 / NBRC 15155 / AMRC-C165).